The following is a 400-amino-acid chain: CCA-adding enzyme (400 aa).

Residues Gly-28 and Arg-31 each contribute to the ATP site. Residues Gly-28 and Arg-31 each contribute to the CTP site. 2 residues coordinate Mg(2+): Asp-41 and Asp-43. 5 residues coordinate ATP: Arg-112, Asp-155, Arg-158, Arg-161, and Arg-164. 5 residues coordinate CTP: Arg-112, Asp-155, Arg-158, Arg-161, and Arg-164.

It belongs to the tRNA nucleotidyltransferase/poly(A) polymerase family. Bacterial CCA-adding enzyme type 3 subfamily. Homodimer. Mg(2+) serves as cofactor.

It carries out the reaction a tRNA precursor + 2 CTP + ATP = a tRNA with a 3' CCA end + 3 diphosphate. The enzyme catalyses a tRNA with a 3' CCA end + 2 CTP + ATP = a tRNA with a 3' CCACCA end + 3 diphosphate. Its function is as follows. Catalyzes the addition and repair of the essential 3'-terminal CCA sequence in tRNAs without using a nucleic acid template. Adds these three nucleotides in the order of C, C, and A to the tRNA nucleotide-73, using CTP and ATP as substrates and producing inorganic pyrophosphate. tRNA 3'-terminal CCA addition is required both for tRNA processing and repair. Also involved in tRNA surveillance by mediating tandem CCA addition to generate a CCACCA at the 3' terminus of unstable tRNAs. While stable tRNAs receive only 3'-terminal CCA, unstable tRNAs are marked with CCACCA and rapidly degraded. The sequence is that of CCA-adding enzyme from Staphylococcus aureus (strain MRSA252).